The following is a 271-amino-acid chain: Formamidopyrimidine-DNA glycosylase (271 aa).

Pro2 functions as the Schiff-base intermediate with DNA in the catalytic mechanism. The Proton donor role is filled by Glu3. Catalysis depends on Lys57, which acts as the Proton donor; for beta-elimination activity. The DNA site is built by His90, Arg109, and Lys151. The segment at 236–270 (HVYGRGGDTCTHCGQLLSEIRLGQRATVFCSICQQ) adopts an FPG-type zinc-finger fold. Catalysis depends on Arg260, which acts as the Proton donor; for delta-elimination activity.

Belongs to the FPG family. Monomer. Requires Zn(2+) as cofactor.

The enzyme catalyses Hydrolysis of DNA containing ring-opened 7-methylguanine residues, releasing 2,6-diamino-4-hydroxy-5-(N-methyl)formamidopyrimidine.. It catalyses the reaction 2'-deoxyribonucleotide-(2'-deoxyribose 5'-phosphate)-2'-deoxyribonucleotide-DNA = a 3'-end 2'-deoxyribonucleotide-(2,3-dehydro-2,3-deoxyribose 5'-phosphate)-DNA + a 5'-end 5'-phospho-2'-deoxyribonucleoside-DNA + H(+). Involved in base excision repair of DNA damaged by oxidation or by mutagenic agents. Acts as a DNA glycosylase that recognizes and removes damaged bases. Has a preference for oxidized purines, such as 7,8-dihydro-8-oxoguanine (8-oxoG). Has AP (apurinic/apyrimidinic) lyase activity and introduces nicks in the DNA strand. Cleaves the DNA backbone by beta-delta elimination to generate a single-strand break at the site of the removed base with both 3'- and 5'-phosphates. This is Formamidopyrimidine-DNA glycosylase from Shewanella piezotolerans (strain WP3 / JCM 13877).